Here is a 714-residue protein sequence, read N- to C-terminus: Polyribonucleotide nucleotidyltransferase (714 aa).

Mg(2+)-binding residues include D487 and D493. The KH domain occupies 554-613 (PRIEVMTIPVDKIREVIGSGGKVIREIVEKTGAKINIEDDGTIKIASASGKEIEAARKWI). Positions 623 to 691 (GVVYEGTVVK…ERGKVRLSMK (69 aa)) constitute an S1 motif domain.

The protein belongs to the polyribonucleotide nucleotidyltransferase family. Mg(2+) is required as a cofactor.

It localises to the cytoplasm. The enzyme catalyses RNA(n+1) + phosphate = RNA(n) + a ribonucleoside 5'-diphosphate. Its function is as follows. Involved in mRNA degradation. Catalyzes the phosphorolysis of single-stranded polyribonucleotides processively in the 3'- to 5'-direction. This chain is Polyribonucleotide nucleotidyltransferase, found in Allorhizobium ampelinum (strain ATCC BAA-846 / DSM 112012 / S4) (Agrobacterium vitis (strain S4)).